A 677-amino-acid polypeptide reads, in one-letter code: Methionine--tRNA ligase (677 aa).

Residues 15–25 carry the 'HIGH' region motif; it reads PYANGSIHLGH. Cys-146, Cys-149, Cys-159, and Cys-162 together coordinate Zn(2+). A 'KMSKS' region motif is present at residues 333–337; the sequence is KMSKS. Lys-336 contacts ATP. The tRNA-binding domain occupies 575–677; sequence DFAKVDLRVA…AGAKPGHQVK (103 aa).

Belongs to the class-I aminoacyl-tRNA synthetase family. MetG type 1 subfamily. Homodimer. Zn(2+) serves as cofactor.

Its subcellular location is the cytoplasm. It carries out the reaction tRNA(Met) + L-methionine + ATP = L-methionyl-tRNA(Met) + AMP + diphosphate. Its function is as follows. Is required not only for elongation of protein synthesis but also for the initiation of all mRNA translation through initiator tRNA(fMet) aminoacylation. This Escherichia coli (strain ATCC 8739 / DSM 1576 / NBRC 3972 / NCIMB 8545 / WDCM 00012 / Crooks) protein is Methionine--tRNA ligase.